We begin with the raw amino-acid sequence, 338 residues long: MSVEERPVIFDDQSELPKVFVGGRKSKLALVQTQHVAAMLKKVHPDYSFPVLGLTTLGDQVQSKPLYSFDGKALWTKELETLLLEKVPGFDQQDIIVHSLKDMPTVLPDGCELGAILTREDPRDALVMAAGSPYKTLADLPAGSVVGTSSIRRSAQLKKSYPGLVYESVRGNVGTRLSKLDDPETPYKCLILAAAGLKRLDLGDRITGYLQKPDMLHAVGQGALGLEIRQGDEKTKKILEAIYDKESTLCCLAERAVMRTLEGGCSVPIGVETKYENGKLTLDAIVVSVEGTEFVECTQVRAVEENWEAEQLGKDVAEQLVKDGAKKILDAIHLENIK.

Cysteine 265 carries the post-translational modification S-(dipyrrolylmethanemethyl)cysteine.

Belongs to the HMBS family. Requires dipyrromethane as cofactor.

It carries out the reaction 4 porphobilinogen + H2O = hydroxymethylbilane + 4 NH4(+). The protein operates within porphyrin-containing compound metabolism; protoporphyrin-IX biosynthesis; coproporphyrinogen-III from 5-aminolevulinate: step 2/4. Tetrapolymerization of the monopyrrole PBG into the hydroxymethylbilane pre-uroporphyrinogen in several discrete steps. The protein is Porphobilinogen deaminase (HEM3) of Yarrowia lipolytica (strain CLIB 122 / E 150) (Yeast).